Here is a 122-residue protein sequence, read N- to C-terminus: Flagellar protein FliT (122 aa).

The required for homodimerization stretch occupies residues 1-50; that stretch reads MTSTVEFINRWQRIALLSQSLLELAQRGEWDLLLQQEVSYLQSIETVMEK. The fliD binding stretch occupies residues 60–98; sequence IQDMVAGYIKQTLDNEQLLKGLLQQRLDELSSLIGQSTR.

The protein belongs to the FliT family. As to quaternary structure, homodimer. Interacts with FliD and FlhC.

It is found in the cytoplasm. The protein localises to the cytosol. Functionally, dual-function protein that regulates the transcription of class 2 flagellar operons and that also acts as an export chaperone for the filament-capping protein FliD. As a transcriptional regulator, acts as an anti-FlhDC factor; it directly binds FlhC, thus inhibiting the binding of the FlhC/FlhD complex to class 2 promoters, resulting in decreased expression of class 2 flagellar operons. As a chaperone, effects FliD transition to the membrane by preventing its premature polymerization, and by directing it to the export apparatus. The protein is Flagellar protein FliT of Salmonella gallinarum (strain 287/91 / NCTC 13346).